A 132-amino-acid chain; its full sequence is Protein KRTCAP2 homolog (132 aa).

4 helical membrane-spanning segments follow: residues 1–21, 35–55, 69–89, and 92–109; these read MAVP…LIFS, MATV…LTAV, AKLF…CGMV, and VCAT…YYIN.

It belongs to the KRTCAP2 family. In terms of assembly, component of the oligosaccharyltransferase (OST) complex.

The protein resides in the membrane. Its function is as follows. Subunit of the oligosaccharyl transferase (OST) complex that catalyzes the initial transfer of a defined glycan (Glc(3)Man(9)GlcNAc(2) in eukaryotes) from the lipid carrier dolichol-pyrophosphate to an asparagine residue within an Asn-X-Ser/Thr consensus motif in nascent polypeptide chains, the first step in protein N-glycosylation. N-glycosylation occurs cotranslationally and the complex associates with the Sec61 complex at the channel-forming translocon complex that mediates protein translocation across the endoplasmic reticulum (ER). All subunits are required for a maximal enzyme activity. This chain is Protein KRTCAP2 homolog, found in Aedes aegypti (Yellowfever mosquito).